We begin with the raw amino-acid sequence, 501 residues long: Cytochrome P450 90A4 (501 aa).

Residues A2–L22 form a helical membrane-spanning segment. Residue C446 coordinates heme.

This sequence belongs to the cytochrome P450 family. Heme is required as a cofactor. Highly expressed in shoot apex and inflorenscence. Expressed in roots, stems, leaf blades and leaf sheaths.

The protein localises to the cell membrane. It functions in the pathway plant hormone biosynthesis; brassinosteroid biosynthesis. Functionally, catalyzes the C23-alpha-hydroxylation step in brassinosteroid biosynthesis. Converts 6-deoxocathasterone to 6-deoxoteasterone in the late C6-oxidation pathway and cathasterone to teasterone (TE) in the early C6-oxidation pathway of brassinolide (BL) biosynthesis. This is Cytochrome P450 90A4 from Oryza sativa subsp. japonica (Rice).